The sequence spans 457 residues: tRNA (guanine(37)-N(1))-methyltransferase (457 aa).

S-adenosyl-L-methionine contacts are provided by residues His-225, 263 to 264, 291 to 292, and Asn-358; these read DL and DG.

The protein belongs to the class I-like SAM-binding methyltransferase superfamily. TRM5/TYW2 family. Monomer.

The protein resides in the mitochondrion matrix. The protein localises to the nucleus. It localises to the cytoplasm. It carries out the reaction guanosine(37) in tRNA + S-adenosyl-L-methionine = N(1)-methylguanosine(37) in tRNA + S-adenosyl-L-homocysteine + H(+). Its function is as follows. Specifically methylates the N1 position of guanosine-37 in various cytoplasmic and mitochondrial tRNAs. Methylation is not dependent on the nature of the nucleoside 5' of the target nucleoside. This is the first step in the biosynthesis of wybutosine (yW), a modified base adjacent to the anticodon of tRNAs and required for accurate decoding. This is tRNA (guanine(37)-N(1))-methyltransferase from Coprinopsis cinerea (strain Okayama-7 / 130 / ATCC MYA-4618 / FGSC 9003) (Inky cap fungus).